The chain runs to 594 residues: UvrABC system protein C (594 aa).

The 87-residue stretch at 13 to 99 (SSSGVYQYFD…IKQLKPKYNI (87 aa)) folds into the GIY-YIG domain. The UVR domain maps to 205–240 (DRLIKELELKMERLSSNLRFEEALIYRDRIAKIQKI).

Belongs to the UvrC family. As to quaternary structure, interacts with UvrB in an incision complex.

Its subcellular location is the cytoplasm. The UvrABC repair system catalyzes the recognition and processing of DNA lesions. UvrC both incises the 5' and 3' sides of the lesion. The N-terminal half is responsible for the 3' incision and the C-terminal half is responsible for the 5' incision. The chain is UvrABC system protein C from Helicobacter pylori (strain J99 / ATCC 700824) (Campylobacter pylori J99).